A 290-amino-acid polypeptide reads, in one-letter code: ATP synthase gamma chain (290 aa).

It belongs to the ATPase gamma chain family. F-type ATPases have 2 components, CF(1) - the catalytic core - and CF(0) - the membrane proton channel. CF(1) has five subunits: alpha(3), beta(3), gamma(1), delta(1), epsilon(1). CF(0) has four main subunits: a, b, b' and c.

The protein localises to the cellular chromatophore membrane. In terms of biological role, produces ATP from ADP in the presence of a proton gradient across the membrane. The gamma chain is believed to be important in regulating ATPase activity and the flow of protons through the CF(0) complex. The chain is ATP synthase gamma chain from Rhodobacter capsulatus (Rhodopseudomonas capsulata).